The primary structure comprises 72 residues: MSLSFSLIVFAVGVAVSIGVLTLTTQQSSSYCLILVDGAKAVVEGCHLRQDIPAILSELKPASSPFNPLFCS.

Residues 1–2 are Lumenal-facing; that stretch reads MS. Residues 3–23 form a helical membrane-spanning segment; it reads LSFSLIVFAVGVAVSIGVLTL. The Cytoplasmic segment spans residues 24–72; the sequence is TTQQSSSYCLILVDGAKAVVEGCHLRQDIPAILSELKPASSPFNPLFCS.

It belongs to the Tymovirales TGBp3 protein family.

It localises to the host endoplasmic reticulum membrane. Functionally, plays a role in viral cell-to-cell propagation, by facilitating genome transport to neighboring plant cells through plasmosdesmata. May induce the formation of granular vesicles derived from the Endoplasmic reticulum, which align on actin filaments. This chain is Movement protein TGBp3 (ORF4), found in Lolium latent virus (isolate Lolium/USA/US1/-) (LoLV).